A 166-amino-acid polypeptide reads, in one-letter code: Phospholipase A2 inhibitor clone 06/08 (166 aa).

A signal peptide spans 1 to 19 (MRLILLSGLLLLGIFLANG). Residues 46–161 (LRGAFLTVYK…CDDNLLVVCE (116 aa)) enclose the C-type lectin domain. N-linked (GlcNAc...) asparagine glycosylation is found at Asn61 and Asn122. Intrachain disulfides connect Cys83/Cys160 and Cys138/Cys152.

This sequence belongs to the alpha-type phospholipase A2 inhibitor family. As to quaternary structure, homotrimer; non-covalently linked. In terms of tissue distribution, expressed by the liver.

The protein resides in the secreted. In terms of biological role, this phospholipase A2 inhibitor binds directly phospholipase A2 in the presence or absence of calcium. The protein is Phospholipase A2 inhibitor clone 06/08 of Bothrops neuwiedi (Neuwied's lancehead).